The primary structure comprises 582 residues: ATP-dependent lipid A-core flippase (582 aa).

5 helical membrane-spanning segments follow: residues 16–36 (LWPH…ALVI), 69–89 (FIIL…GYCM), 153–173 (IIGL…VLVV), 250–270 (LANP…LYLA), and 275–295 (IKET…FGLL). Positions 29 to 310 (VAVVALVINA…LTSVTSDFQR (282 aa)) constitute an ABC transmembrane type-1 domain. An ABC transporter domain is found at 342-578 (IKVDNVTFTY…DGAYAQLHRI (237 aa)). 376-383 (GRSGSGKS) is a binding site for ATP.

It belongs to the ABC transporter superfamily. Lipid exporter (TC 3.A.1.106) family. Homodimer.

The protein localises to the cell inner membrane. The catalysed reaction is ATP + H2O + lipid A-core oligosaccharideSide 1 = ADP + phosphate + lipid A-core oligosaccharideSide 2.. In terms of biological role, involved in lipopolysaccharide (LPS) biosynthesis. Translocates lipid A-core from the inner to the outer leaflet of the inner membrane. Transmembrane domains (TMD) form a pore in the inner membrane and the ATP-binding domain (NBD) is responsible for energy generation. In Aliivibrio fischeri (strain ATCC 700601 / ES114) (Vibrio fischeri), this protein is ATP-dependent lipid A-core flippase.